Consider the following 201-residue polypeptide: Large ribosomal subunit protein bL9 (201 aa).

The segment covering 150-165 has biased composition (basic and acidic residues); the sequence is EAERQAAGEDLTQRRD. The segment at 150–201 is disordered; the sequence is EAERQAAGEDLTQRRDDEEEEAVEAAEFFESEELAPGDEEEEAAGEEEDAKE. A compositionally biased stretch (acidic residues) spans 166-201; that stretch reads DEEEEAVEAAEFFESEELAPGDEEEEAAGEEEDAKE.

Belongs to the bacterial ribosomal protein bL9 family.

Binds to the 23S rRNA. This chain is Large ribosomal subunit protein bL9, found in Parvibaculum lavamentivorans (strain DS-1 / DSM 13023 / NCIMB 13966).